Here is a 255-residue protein sequence, read N- to C-terminus: Triosephosphate isomerase (255 aa).

9-11 contributes to the substrate binding site; the sequence is NWK. Histidine 95 functions as the Electrophile in the catalytic mechanism. The Proton acceptor role is filled by glutamate 167. Substrate-binding positions include glycine 173, serine 212, and 233–234; that span reads GG.

The protein belongs to the triosephosphate isomerase family. As to quaternary structure, homodimer.

It is found in the cytoplasm. The enzyme catalyses D-glyceraldehyde 3-phosphate = dihydroxyacetone phosphate. The protein operates within carbohydrate biosynthesis; gluconeogenesis. It participates in carbohydrate degradation; glycolysis; D-glyceraldehyde 3-phosphate from glycerone phosphate: step 1/1. Involved in the gluconeogenesis. Catalyzes stereospecifically the conversion of dihydroxyacetone phosphate (DHAP) to D-glyceraldehyde-3-phosphate (G3P). The chain is Triosephosphate isomerase from Sodalis glossinidius (strain morsitans).